The primary structure comprises 241 residues: DnaA regulatory inactivator Hda (241 aa).

The protein belongs to the DnaA family. HdA subfamily. The active form seems to be an ADP-bound monomer. Forms the RIDA complex (regulatory inactivation of DnaA) of ATP-DnaA, ADP-Hda and the DNA-loaded beta sliding clamp (dnaN).

Mediates the interaction of DNA replication initiator protein DnaA with DNA polymerase subunit beta sliding clamp (dnaN). Stimulates hydrolysis of ATP-DnaA to ADP-DnaA, rendering DnaA inactive for reinitiation, a process called regulatory inhibition of DnaA or RIDA. The sequence is that of DnaA regulatory inactivator Hda from Citrobacter koseri (strain ATCC BAA-895 / CDC 4225-83 / SGSC4696).